A 709-amino-acid polypeptide reads, in one-letter code: Putative extracellular sulfatase Sulf-1 homolog (709 aa).

The signal sequence occupies residues 1–27; it reads MISNLRISNYFIIFYVLFLIIPIKVTS. 3 residues coordinate Ca(2+): D43, D44, and C79. C79 acts as the Nucleophile in catalysis. C79 carries the post-translational modification 3-oxoalanine (Cys). N-linked (GlcNAc...) asparagine glycans are attached at residues N103, N162, and N189. Residues D308 and H309 each coordinate Ca(2+). Residues N344, N468, N500, N540, N566, N610, and N620 are each glycosylated (N-linked (GlcNAc...) asparagine).

Belongs to the sulfatase family. Ca(2+) serves as cofactor. Post-translationally, the conversion to 3-oxoalanine (also known as C-formylglycine, FGly), of a serine or cysteine residue in prokaryotes and of a cysteine residue in eukaryotes, is critical for catalytic activity.

It is found in the endoplasmic reticulum. The protein localises to the golgi apparatus. The protein resides in the golgi stack. It localises to the cell surface. The sequence is that of Putative extracellular sulfatase Sulf-1 homolog (sul-1) from Caenorhabditis elegans.